A 217-amino-acid polypeptide reads, in one-letter code: MRFNIDEWEPKTTIGRMVKEGQITDIDYILDNNLPILEPEIVDALLPDLEEKVLDVKLVQRMHKSGRRARFRATVVVGNRNGYVGVGKGKAKEVGPAIRKAIAQAKKNIIRVKRGCGSWECGCGTPHSIPYKGYGKCGSTAIEILPAPKGVGLVAGDVAKAVLGLAGIKDVWTKTFGETRTTYNFAMATFEALKSLNFTRTMEKHKEKLGIVEGRVL.

The S5 DRBM domain maps to 49–112; the sequence is LEEKVLDVKL…AQAKKNIIRV (64 aa).

Belongs to the universal ribosomal protein uS5 family. As to quaternary structure, part of the 30S ribosomal subunit. Contacts protein S4.

In terms of biological role, with S4 and S12 plays an important role in translational accuracy. This chain is Small ribosomal subunit protein uS5, found in Methanocaldococcus jannaschii (strain ATCC 43067 / DSM 2661 / JAL-1 / JCM 10045 / NBRC 100440) (Methanococcus jannaschii).